The following is a 579-amino-acid chain: Glypican-2 (579 aa).

Positions 1–23 (MSALRPLLLLLLPLCPGPGPGPG) are cleaved as a signal peptide. O-linked (Xyl...) (heparan sulfate) serine glycans are attached at residues Ser55, Ser92, and Ser155. Disordered regions lie at residues 444–468 (GGSP…VPTR) and 485–555 (ALGH…RSGG). O-linked (Xyl...) (heparan sulfate) serine glycosylation is found at Ser500 and Ser502. The segment covering 520–529 (PARPPRPPYP) has biased composition (pro residues). Residue Gly554 is the site of GPI-anchor amidated glycine attachment. Positions 555–579 (GASIGFHTQTILILSLSALALLGPR) are cleaved as a propeptide — removed in mature form.

This sequence belongs to the glypican family. In terms of assembly, interacts (via heparan sulfate) with PTN; this interaction promotes neurite outgrowth through binding of PTN with chondroitin sulfate of proteoglycans, thereby releasing PTPRS of chondroitin sulfate proteoglycans (CSPGs) and leading to binding with heparan sulfate of GPC2. Interacts (heparan sulfate chain) with MDK; this interaction is inhibited by heparin followed by chondroitin sulfate E; this interaction induces GPC2 clustering through heparan sulfate chain; this interaction induces neuronal cell adhesion and neurite outgrowth.

The protein resides in the cell membrane. It localises to the secreted. The protein localises to the extracellular space. Its function is as follows. Cell surface proteoglycan that bears heparan sulfate. May fulfill a function related to the motile behaviors of developing neurons. In Homo sapiens (Human), this protein is Glypican-2 (GPC2).